Here is a 388-residue protein sequence, read N- to C-terminus: Lipoyl synthase, mitochondrial (388 aa).

The N-terminal 18 residues, 1-18, are a transit peptide targeting the mitochondrion; the sequence is MRLTTVQRRFLVSTKAKV. Residues 22-39 show a composition bias toward low complexity; it reads SISSTANTGSASAGAPNG. Residues 22–43 are disordered; sequence SISSTANTGSASAGAPNGQTRR. Positions 120, 125, 131, 151, 155, 158, and 366 each coordinate [4Fe-4S] cluster. Positions 134-355 constitute a Radical SAM core domain; that stretch reads GKDKSKATAT…KDKAKEMGFL (222 aa).

The protein belongs to the radical SAM superfamily. Lipoyl synthase family. It depends on [4Fe-4S] cluster as a cofactor.

It localises to the mitochondrion. It carries out the reaction [[Fe-S] cluster scaffold protein carrying a second [4Fe-4S](2+) cluster] + N(6)-octanoyl-L-lysyl-[protein] + 2 oxidized [2Fe-2S]-[ferredoxin] + 2 S-adenosyl-L-methionine + 4 H(+) = [[Fe-S] cluster scaffold protein] + N(6)-[(R)-dihydrolipoyl]-L-lysyl-[protein] + 4 Fe(3+) + 2 hydrogen sulfide + 2 5'-deoxyadenosine + 2 L-methionine + 2 reduced [2Fe-2S]-[ferredoxin]. It functions in the pathway protein modification; protein lipoylation via endogenous pathway; protein N(6)-(lipoyl)lysine from octanoyl-[acyl-carrier-protein]: step 2/2. Its function is as follows. Catalyzes the radical-mediated insertion of two sulfur atoms into the C-6 and C-8 positions of the octanoyl moiety bound to the lipoyl domains of lipoate-dependent enzymes, thereby converting the octanoylated domains into lipoylated derivatives. In Candida glabrata (strain ATCC 2001 / BCRC 20586 / JCM 3761 / NBRC 0622 / NRRL Y-65 / CBS 138) (Yeast), this protein is Lipoyl synthase, mitochondrial.